A 531-amino-acid chain; its full sequence is Transactivator/viroplasmin protein (531 aa).

Disordered regions lie at residues 80-101 (ASGK…TATG) and 505-531 (CKSE…SVLV). Polar residues-rich tracts occupy residues 91–100 (SATSPEQTAT) and 505–517 (CKSE…TSEE). Positions 518–531 (GLQESEDEDFSVLV) are enriched in acidic residues.

Belongs to the caulimoviridae viroplasmin family.

Its subcellular location is the host cytoplasm. In terms of biological role, enhances the translation of downstream ORFs on polycistronic mRNAs. This Cestrum yellow leaf curling virus (CmYLCV) protein is Transactivator/viroplasmin protein.